The chain runs to 811 residues: Phosphoinositide 3-kinase adapter protein 1 (811 aa).

A TIR domain is found at 8-146; sequence RGCDILIFYS…AVRKAISEDS (139 aa). Residues 10-145 form a necessary and sufficient to mediate inhibition of NF-kappa-B downstream of activated TLRs; may mediate interaction with MYD88 and TIRAP region; sequence CDILIFYSPD…AAVRKAISED (136 aa). Positions 146–169 are disordered; that stretch reads SGCDSVTDTEPEDERELPFSKQTN. A DBB domain is found at 182 to 318; it reads VQPDRIRCGA…NIPASGLHLF (137 aa). Tyr-264 bears the Phosphotyrosine mark. Residues Tyr-420, Tyr-445, and Tyr-460 each carry the phosphotyrosine; by SYK modification. Phosphotyrosine; by ABL1 is present on Tyr-513. The disordered stretch occupies residues 525–551; that stretch reads DLANRPPVPVPRPEASAPGPPPPPDNE. Over residues 530 to 550 the composition is skewed to pro residues; that stretch reads PPVPVPRPEASAPGPPPPPDN. Phosphotyrosine; by ABL1 occurs at positions 553, 570, and 594. Ser-642 carries the phosphoserine modification. Position 694 is a phosphotyrosine; by ABL1 (Tyr-694). Residues 702-811 form a disordered region; it reads VLPARTELRR…PPPPVPPRGR (110 aa). The span at 707 to 716 shows a compositional bias: basic and acidic residues; that stretch reads TELRRGDWKT. A compositionally biased stretch (low complexity) spans 717–740; sequence DSMSSTASSTSNRSSTRSLLSVSS. Ser-718 carries the post-translational modification Phosphoserine. Positions 801–811 are enriched in pro residues; the sequence is HPPPPVPPRGR.

In terms of assembly, homooligomer. Interacts (phosphorylated on tyrosine residues within YXXM motifs) with PIK3R1 (via SH2 domain); required for BCR- and TLR-mediated activation of phosphoinositide 3-kinase. Interacts (via polyproline C-terminal region) with ABI1 (via SH3 domain); the interaction promotes phosphorylation of PIK3AP1 by ABL1. May interact with MYD88 and TIRAP. Post-translationally, constitutively phosphorylated. Phosphorylated on tyrosine residues in C-terminal region by ABL1. Phosphorylated on tyrosine residues within the YXXM motifs by BTK and SYK. Isoform 1 and isoform 2 are phosphorylated on tyrosine residues, most likely within the YXXM motifs, via CD19 activation. Toll-like receptor activation induces appearance of a phosphorylated form associated with membranes. As to expression, predominantly expressed in spleen (at protein level). Expressed at lower levels in thymus, liver and lung. Expressed in B-cells, macrophages and natural killer (NK) cells.

It localises to the cytoplasm. The protein localises to the cell membrane. In terms of biological role, signaling adapter that contributes to B-cell development by linking B-cell receptor (BCR) signaling to the phosphoinositide 3-kinase (PI3K)-Akt signaling pathway. Has a complementary role to the BCR coreceptor CD19, coupling BCR and PI3K activation by providing a docking site for the PI3K subunit PIK3R1. Alternatively, links Toll-like receptor (TLR) signaling to PI3K activation, a process preventing excessive inflammatory cytokine production. Also involved in the activation of PI3K in natural killer cells. May be involved in the survival of mature B-cells via activation of REL. This is Phosphoinositide 3-kinase adapter protein 1 (Pik3ap1) from Mus musculus (Mouse).